The following is a 140-amino-acid chain: MFAVLKTGGKQYRVQAGDVLRVEKLNAEAGDKVQFNDVLMIGSAVGAPLVAGAAVQAEVIDTIKADKVITYVKRRRKHSSQRTRGHRQQLTLVRITDLLEKGGDKSGVKPAVGARTKIEPAVKPAKAKKSEAEASAEDAN.

The disordered stretch occupies residues 106–140 (SGVKPAVGARTKIEPAVKPAKAKKSEAEASAEDAN).

Belongs to the bacterial ribosomal protein bL21 family. As to quaternary structure, part of the 50S ribosomal subunit. Contacts protein L20.

Functionally, this protein binds to 23S rRNA in the presence of protein L20. The protein is Large ribosomal subunit protein bL21 of Paracoccus denitrificans (strain Pd 1222).